We begin with the raw amino-acid sequence, 361 residues long: Phosphoserine aminotransferase (361 aa).

Arg-42 provides a ligand contact to L-glutamate. Pyridoxal 5'-phosphate is bound by residues 76 to 77 (AR), Trp-102, Thr-153, Asp-173, and Gln-196. N6-(pyridoxal phosphate)lysine is present on Lys-197. 238-239 (NT) lines the pyridoxal 5'-phosphate pocket.

Belongs to the class-V pyridoxal-phosphate-dependent aminotransferase family. SerC subfamily. In terms of assembly, homodimer. It depends on pyridoxal 5'-phosphate as a cofactor.

Its subcellular location is the cytoplasm. The catalysed reaction is O-phospho-L-serine + 2-oxoglutarate = 3-phosphooxypyruvate + L-glutamate. The enzyme catalyses 4-(phosphooxy)-L-threonine + 2-oxoglutarate = (R)-3-hydroxy-2-oxo-4-phosphooxybutanoate + L-glutamate. The protein operates within amino-acid biosynthesis; L-serine biosynthesis; L-serine from 3-phospho-D-glycerate: step 2/3. It participates in cofactor biosynthesis; pyridoxine 5'-phosphate biosynthesis; pyridoxine 5'-phosphate from D-erythrose 4-phosphate: step 3/5. Its function is as follows. Catalyzes the reversible conversion of 3-phosphohydroxypyruvate to phosphoserine and of 3-hydroxy-2-oxo-4-phosphonooxybutanoate to phosphohydroxythreonine. This chain is Phosphoserine aminotransferase, found in Buchnera aphidicola subsp. Schizaphis graminum (strain Sg).